A 191-amino-acid polypeptide reads, in one-letter code: Chorion class B protein Ld34 (191 aa).

A signal peptide spans 1-21; it reads MSAKIILVFCAQALFVQSALS.

The protein belongs to the chorion protein family.

Functionally, this protein is one of many from the eggshell of the gypsy moth. In Lymantria dispar (Gypsy moth), this protein is Chorion class B protein Ld34.